The following is a 418-amino-acid chain: Serine protease inhibitor A3N (418 aa).

The N-terminal stretch at 1–29 (MTRLVTLELLMAGIGSALLCFPDCILGED) is a signal peptide. The residue at position 93 (S93) is a Phosphoserine. N104, N258, and N269 each carry an N-linked (GlcNAc...) asparagine glycan. The RCL stretch occupies residues 367–394 (GTEAAAATGVKFVPMSAKLDPLIIAFDR).

Belongs to the serpin family. Post-translationally, N-glycosylated. In terms of tissue distribution, liver.

The protein resides in the secreted. In Rattus norvegicus (Rat), this protein is Serine protease inhibitor A3N (Serpina3n).